Consider the following 178-residue polypeptide: Alkyl hydroperoxide reductase AhpD (178 aa).

The active-site Proton donor is C130. The cysteines at positions 130 and 133 are disulfide-linked. The Cysteine sulfenic acid (-SOH) intermediate role is filled by C133.

Belongs to the AhpD family. Homotrimer.

It catalyses the reaction N(6)-[(R)-dihydrolipoyl]-L-lysyl-[lipoyl-carrier protein] + a hydroperoxide = N(6)-[(R)-lipoyl]-L-lysyl-[lipoyl-carrier protein] + an alcohol + H2O. In terms of biological role, antioxidant protein with alkyl hydroperoxidase activity. Required for the reduction of the AhpC active site cysteine residues and for the regeneration of the AhpC enzyme activity. The chain is Alkyl hydroperoxide reductase AhpD from Mycobacterium marinum (strain ATCC BAA-535 / M).